Consider the following 291-residue polypeptide: 33 kDa chaperonin (291 aa).

2 disulfides stabilise this stretch: C235-C237 and C268-C271.

The protein belongs to the HSP33 family. In terms of processing, under oxidizing conditions two disulfide bonds are formed involving the reactive cysteines. Under reducing conditions zinc is bound to the reactive cysteines and the protein is inactive.

It is found in the cytoplasm. In terms of biological role, redox regulated molecular chaperone. Protects both thermally unfolding and oxidatively damaged proteins from irreversible aggregation. Plays an important role in the bacterial defense system toward oxidative stress. In Streptococcus agalactiae serotype Ia (strain ATCC 27591 / A909 / CDC SS700), this protein is 33 kDa chaperonin.